The sequence spans 315 residues: MEEMSGDSVVSSAVPAAATRTTSFKGASPSSKYVKLNVGGALYYTTMQTLTKQDTMLKAMFSGRMEVLTDSEGWILIDRCGKHFGTILNYLRDGGVPLPESRREIEELLAEAKYYLVQGLLEECQAALQNKDTYEPFCKVPVITSSKEEQRLIATSNKPAVKLLYNRSNNKYSYTSNSDDNMLKNIELFDKLSLRFNGRVLFIKDVIGDEICCWSFYGQGRKIAEVCCTSIVYATEKKQTKVEFPEARIYEETLNILLYEAQDGRGPDNALLEATGGAAGRSHHLDEDEERERERIERVRRIHIKRPDDRAHLHQ.

M1 bears the N-acetylmethionine mark. S23 is modified (phosphoserine). The region spanning 32–100 is the BTB domain; the sequence is KYVKLNVGGA…LRDGGVPLPE (69 aa). Positions 239 to 245 match the PCNA-binding motif; sequence QTKVEFP. Residues 269–294 form a disordered region; sequence NALLEATGGAAGRSHHLDEDEERERE.

Belongs to the BACURD family. Homotetramer; forms a two-fold symmetric tetramer in solution. Interacts with CUL3; interaction is direct and forms a 5:5 heterodecamer. Component of the BCR(BACURD3) E3 ubiquitin ligase complex, at least composed of CUL3, KCTD10/BACURD3 and RBX1. Interacts with DNA polymerase delta subunit 2/POLD2. Interacts with PCNA. Associated with the tectonic-like complex (also named B9 complex); however as Kctd10 has not been identified in all tectonic-like complexes purifications it is unclear whether it is really part of the complex.

Its subcellular location is the nucleus. Its pathway is protein modification; protein ubiquitination. In terms of biological role, substrate-specific adapter of a BCR (BTB-CUL3-RBX1) E3 ubiquitin-protein ligase complex. The BCR(BACURD3) E3 ubiquitin ligase complex mediates the ubiquitination of target proteins, leading to their degradation by the proteasome. In Mus musculus (Mouse), this protein is BTB/POZ domain-containing adapter for CUL3-mediated RhoA degradation protein 3 (Kctd10).